Here is a 120-residue protein sequence, read N- to C-terminus: Fumarate reductase subunit D (120 aa).

3 helical membrane passes run 25 to 45 (FAML…LGVI), 55 to 75 (VAGF…ISMP), and 100 to 120 (IACY…IFMI).

Belongs to the FrdD family. As to quaternary structure, part of an enzyme complex containing four subunits: a flavoprotein (FrdA), an iron-sulfur protein (FrdB), and two hydrophobic anchor proteins (FrdC and FrdD).

It localises to the cell inner membrane. Its function is as follows. Anchors the catalytic components of the fumarate reductase complex to the cell membrane, binds quinones. This is Fumarate reductase subunit D from Aliivibrio fischeri (strain MJ11) (Vibrio fischeri).